The primary structure comprises 772 residues: Putative ribosomal protein S6 kinase alpha-2 (772 aa).

The Protein kinase 1 domain occupies 17-284; that stretch reads FALLRVLGKG…VDEIKNHKFM (268 aa). Residues 23 to 31 and lysine 49 each bind ATP; that span reads LGKGAYGKV. Aspartate 145 acts as the Proton acceptor in catalysis. Phosphoserine; by autocatalysis is present on residues serine 180, serine 342, and serine 347. One can recognise an AGC-kinase C-terminal domain in the interval 285 to 353; that stretch reads SSIDWDAAVK…VSPSVIFAND (69 aa). Residues 382–653 form the Protein kinase 2 domain; that stretch reads KSDAGLLGKG…MQELTAHMWL (272 aa). Residues 388–396 and lysine 411 contribute to the ATP site; that span reads LGKGAFSVV. The active-site Proton acceptor is the aspartate 500. The segment at 706–772 is disordered; sequence RGIKRQSGDK…IRETRGSDSS (67 aa). Serine 712 carries the post-translational modification Phosphoserine; by autocatalysis. Polar residues-rich tracts occupy residues 718–727 and 739–748; these read SGNSKNSRVT and EMTSSTSRPS.

The protein belongs to the protein kinase superfamily. AGC Ser/Thr protein kinase family. S6 kinase subfamily. Mg(2+) is required as a cofactor.

It catalyses the reaction L-seryl-[protein] + ATP = O-phospho-L-seryl-[protein] + ADP + H(+). The catalysed reaction is L-threonyl-[protein] + ATP = O-phospho-L-threonyl-[protein] + ADP + H(+). Its activity is regulated as follows. Activated by multiple phosphorylations on threonine and serine residues. Its function is as follows. Serine/threonine kinase that may play a role in mediating the mitogen- and stress-induced effects on transcription. May repress transcription via phosphorylation of 'Ser-1' of histone H2A. May phosphorylate histone H3. In Caenorhabditis elegans, this protein is Putative ribosomal protein S6 kinase alpha-2 (rskn-2).